Reading from the N-terminus, the 200-residue chain is MFVYGSIINPCPTEHVMSVLAISITTVALAEIGDKTQLLSLLLASRYRKPIPIIAAIFLATLANHALAAWLGVVVADYLSPDILKWVLVVSFLTMAGWILIPDKLDGEESISTRGPFVASFIAFFMAEIGDKTQIATSILGAQYADALSWVIVGTTLGMLLANVPVVLIGKLSADKMPLGLIRKVTAGLFLLMALATAFF.

6 helical membrane passes run 13 to 33 (TEHVMSVLAISITTVALAEIG), 53 to 73 (IIAAIFLATLANHALAAWLGV), 81 to 101 (PDILKWVLVVSFLTMAGWILI), 110 to 130 (SISTRGPFVASFIAFFMAEIG), 150 to 170 (WVIVGTTLGMLLANVPVVLIG), and 180 to 200 (GLIRKVTAGLFLLMALATAFF).

Belongs to the GDT1 family.

The protein localises to the cell inner membrane. In terms of biological role, involved in manganese homeostasis. May function as a manganese exporter. The chain is Putative manganese exporter from Vibrio cholerae serotype O1 (strain ATCC 39541 / Classical Ogawa 395 / O395).